The following is a 119-amino-acid chain: MVRNNEIGARPNKYWPVVAAVVAICLFGFLTVTNQKHATQSGDNIHKFANGGQYRDGSKSIKYNCNNPRAYNGSSSNITFSQLFLPVLLIGAALYAYLWFTRPDCSVTCRGDCCRSYGG.

Residues 1-13 (MVRNNEIGARPNK) are Cytoplasmic-facing. A helical transmembrane segment spans residues 14-34 (YWPVVAAVVAICLFGFLTVTN). Residues 35–79 (QKHATQSGDNIHKFANGGQYRDGSKSIKYNCNNPRAYNGSSSNIT) lie on the Lumenal side of the membrane. A helical membrane pass occupies residues 80-100 (FSQLFLPVLLIGAALYAYLWF). Residues 101 to 119 (TRPDCSVTCRGDCCRSYGG) are Cytoplasmic-facing.

The protein belongs to the virgaviridae/benyvirus TGB2 movement protein family. As to quaternary structure, interacts with movement protein TGB3. TGB1-TGB3-TGB2 complex formation is enhanced by ATP hydrolysis.

The protein localises to the host cell junction. The protein resides in the host plasmodesma. It localises to the host endoplasmic reticulum membrane. It is found in the host cytoplasm. Its subcellular location is the host cytoskeleton. The protein localises to the host chloroplast envelope. In terms of biological role, participates in the transport of viral genome to neighboring plant cells directly through plasmodesmata, without any budding. TGBp2 and TGBp3 are necessary for intracellular delivery of TGBp1-containing vRNPs to plasmodesmata. Can gate plasmodesmata and increase their size exclusion limit. To a lesser extent than TGB3, induces host actin cytoskeleton network thickening, which probably plays a major role in virus cell-to-cell movement. Binds ssRNA in a sequence non-specific manner. This is Movement protein TGB2 from Potato mop-top virus (isolate Potato/Sweden/Sw) (PMTV).